Here is a 71-residue protein sequence, read N- to C-terminus: Small ribosomal subunit protein bS21 (71 aa).

This sequence belongs to the bacterial ribosomal protein bS21 family.

The protein is Small ribosomal subunit protein bS21 of Ruthia magnifica subsp. Calyptogena magnifica.